Reading from the N-terminus, the 649-residue chain is Leucine-rich repeat transmembrane protein FLRT3 (649 aa).

A signal peptide spans 1–28 (MISAAWSIFLIGTKIGLFLQVAPLSVMA). In terms of domain architecture, LRRNT spans 29–58 (KSCPSVCRCDAGFIYCNDRFLTSIPTGIPE). Residues 29–528 (KSCPSVCRCD…KEPYKNPNLP (500 aa)) lie on the Extracellular side of the membrane. 2 cysteine pairs are disulfide-bonded: Cys31-Cys37 and Cys35-Cys44. An interaction with ADGRL3 region spans residues 38 to 67 (DAGFIYCNDRFLTSIPTGIPEDATTLYLQN). LRR repeat units follow at residues 59 to 80 (DATT…SDLK), 84 to 104 (KVER…NLPK), 105 to 126 (YVKE…SLSK), 129 to 150 (YLEE…EGAF), 155 to 175 (YLRL…GLPR), 176 to 197 (TIEE…SLQG), 200 to 220 (SLKR…GDKV), 226 to 247 (NLTE…LPGT), 248 to 269 (NLRK…AFSY), and 272 to 293 (QLYR…IFDD). Asn226 carries N-linked (GlcNAc...) asparagine glycosylation. N-linked (GlcNAc...) asparagine glycans are attached at residues Asn282 and Asn296. The 53-residue stretch at 305-357 (NPWYCGCKMKWVRDWLQSLPVKVNVRGLMCQAPEKVRGMAIKDLNAELFDCKD) folds into the LRRCT domain. Residues Cys309 and Cys334 are joined by a disulfide bond. The segment at 387 to 407 (KQPDIKNPKLTKDHQTTGSPS) is disordered. Residues 389–401 (PDIKNPKLTKDHQ) show a composition bias toward basic and acidic residues. The 96-residue stretch at 409-504 (KTITITVKSV…VCIETETAPL (96 aa)) folds into the Fibronectin type-III domain. A helical transmembrane segment spans residues 529 to 549 (LAAIIGGAVALVTIALLALVC). Residues 550 to 649 (WYVHRNGSLF…GIPDSDHSHS (100 aa)) are Cytoplasmic-facing. Residues 622–649 (LYKNNHSESSSNRSYRDSGIPDSDHSHS) are disordered.

Monomer and homodimer. Self-associates (via leucine-rich repeats), giving rise to homooligomers. Interacts with FGFR1. Interacts (via extracellular domain) with ADGRL1/LPHN1 and LPHN2 (via olfactomedin-like domain). Interacts (via extracellular domain) with ADGRL3 (via olfactomedin-like domain); the interaction is direct. Interacts (via extracellular domain) with UNC5B and UNC5D (via extracellular domain); the interaction is direct. Identified in complexes composed of FLRT3, ADGRL3 and UNC5B, respectively FLRT3, ADGRL3 and UNC5D. May also interact (via extracellular domain) with UNC5A and UNC5C. Interacts (via cytoplasmic domain) with ROBO1. N-glycosylated. In terms of processing, proteolytic cleavage in the juxtamembrane region gives rise to a soluble ectodomain. Cleavage is probably effected by a metalloprotease. As to expression, expressed in kidney, brain, pancreas, skeletal muscle, lung, liver, placenta, and heart.

The protein resides in the cell membrane. Its subcellular location is the presynaptic cell membrane. The protein localises to the endoplasmic reticulum membrane. It localises to the cell junction. It is found in the focal adhesion. The protein resides in the secreted. Its subcellular location is the cell projection. The protein localises to the axon. It localises to the growth cone membrane. Its function is as follows. Functions in cell-cell adhesion, cell migration and axon guidance, exerting an attractive or repulsive role depending on its interaction partners. Plays a role in the spatial organization of brain neurons. Plays a role in vascular development in the retina. Plays a role in cell-cell adhesion via its interaction with ADGRL3 and probably also other latrophilins that are expressed at the surface of adjacent cells. Interaction with the intracellular domain of ROBO1 mediates axon attraction towards cells expressing NTN1. Mediates axon growth cone collapse and plays a repulsive role in neuron guidance via its interaction with UNC5B, and possibly also other UNC-5 family members. Promotes neurite outgrowth (in vitro). Mediates cell-cell contacts that promote an increase both in neurite number and in neurite length. Plays a role in the regulation of the density of glutamaergic synapses. Plays a role in fibroblast growth factor-mediated signaling cascades. Required for normal morphogenesis during embryonic development, but not for normal embryonic patterning. Required for normal ventral closure, headfold fusion and definitive endoderm migration during embryonic development. Required for the formation of a normal basement membrane and the maintenance of a normal anterior visceral endoderm during embryonic development. The chain is Leucine-rich repeat transmembrane protein FLRT3 (FLRT3) from Homo sapiens (Human).